The sequence spans 100 residues: Integration host factor subunit alpha (100 aa).

It belongs to the bacterial histone-like protein family. Heterodimer of an alpha and a beta chain.

Functionally, this protein is one of the two subunits of integration host factor, a specific DNA-binding protein that functions in genetic recombination as well as in transcriptional and translational control. The protein is Integration host factor subunit alpha of Cereibacter sphaeroides (strain ATCC 17023 / DSM 158 / JCM 6121 / CCUG 31486 / LMG 2827 / NBRC 12203 / NCIMB 8253 / ATH 2.4.1.) (Rhodobacter sphaeroides).